The primary structure comprises 183 residues: Acireductone dioxygenase (183 aa).

His95, His97, Glu101, and His139 together coordinate Fe(2+). Positions 95, 97, 101, and 139 each coordinate Ni(2+).

Belongs to the acireductone dioxygenase (ARD) family. Monomer. The cofactor is Fe(2+). It depends on Ni(2+) as a cofactor.

The catalysed reaction is 1,2-dihydroxy-5-(methylsulfanyl)pent-1-en-3-one + O2 = 3-(methylsulfanyl)propanoate + CO + formate + 2 H(+). It carries out the reaction 1,2-dihydroxy-5-(methylsulfanyl)pent-1-en-3-one + O2 = 4-methylsulfanyl-2-oxobutanoate + formate + 2 H(+). It functions in the pathway amino-acid biosynthesis; L-methionine biosynthesis via salvage pathway; L-methionine from S-methyl-5-thio-alpha-D-ribose 1-phosphate: step 5/6. Its function is as follows. Catalyzes 2 different reactions between oxygen and the acireductone 1,2-dihydroxy-3-keto-5-methylthiopentene (DHK-MTPene) depending upon the metal bound in the active site. Fe-containing acireductone dioxygenase (Fe-ARD) produces formate and 2-keto-4-methylthiobutyrate (KMTB), the alpha-ketoacid precursor of methionine in the methionine recycle pathway. Ni-containing acireductone dioxygenase (Ni-ARD) produces methylthiopropionate, carbon monoxide and formate, and does not lie on the methionine recycle pathway. In Hydrogenobaculum sp. (strain Y04AAS1), this protein is Acireductone dioxygenase.